Consider the following 259-residue polypeptide: Imidazole glycerol phosphate synthase subunit HisF (259 aa).

Active-site residues include aspartate 11 and aspartate 130.

Belongs to the HisA/HisF family. In terms of assembly, heterodimer of HisH and HisF.

It localises to the cytoplasm. The enzyme catalyses 5-[(5-phospho-1-deoxy-D-ribulos-1-ylimino)methylamino]-1-(5-phospho-beta-D-ribosyl)imidazole-4-carboxamide + L-glutamine = D-erythro-1-(imidazol-4-yl)glycerol 3-phosphate + 5-amino-1-(5-phospho-beta-D-ribosyl)imidazole-4-carboxamide + L-glutamate + H(+). The protein operates within amino-acid biosynthesis; L-histidine biosynthesis; L-histidine from 5-phospho-alpha-D-ribose 1-diphosphate: step 5/9. In terms of biological role, IGPS catalyzes the conversion of PRFAR and glutamine to IGP, AICAR and glutamate. The HisF subunit catalyzes the cyclization activity that produces IGP and AICAR from PRFAR using the ammonia provided by the HisH subunit. The chain is Imidazole glycerol phosphate synthase subunit HisF from Chloroflexus aurantiacus (strain ATCC 29366 / DSM 635 / J-10-fl).